The following is a 753-amino-acid chain: A-kinase anchor protein 200 (753 aa).

Disordered stretches follow at residues 1–345 (MGKA…QIEA), 462–482 (VETRSSSPPPPLPKSPPPSRV), 531–604 (TEQE…IDPA), 620–641 (VEKETGSISSNVAESSSVSDEQ), and 658–684 (VEETTEQETSDQQVISEEAHSDNDKEN). Gly-2 is lipidated: N-myristoyl glycine. Basic and acidic residues-rich tracts occupy residues 8-38 (RSIDITTDPKKVGEGDEVAGKVEKIDVDQKT) and 59-77 (AVEKKETEEHSENDKDLTT). The span at 81–93 (AAVAEGGDAVAET) shows a compositional bias: low complexity. The segment at 119–148 (KSKSKKDKVKKKWSFRSISFGKKDKQKPAK) is F-actin binding. Residues 120 to 132 (SKSKKDKVKKKWS) show a composition bias toward basic residues. Ser-132, Ser-135, and Ser-137 each carry phosphoserine. Positions 139–151 (GKKDKQKPAKSEE) are enriched in basic and acidic residues. A compositionally biased stretch (low complexity) spans 152–181 (ATSPTSGTTSPTTAEAEAAPAGDAAVAEPS). The span at 216–227 (EQEKQANGETEK) shows a compositional bias: basic and acidic residues. Residues 246-262 (EPATVTATESNTTATEE) show a composition bias toward low complexity. Residues 345-725 (ASSEVIETVT…AEQEGESNNK (381 aa)) form an interaction with PKA-R2 region. Positions 468-480 (SPPPPLPKSPPPS) are enriched in pro residues. Residues 532 to 544 (EQEKQQEEAKVDS) are compositionally biased toward basic and acidic residues. A compositionally biased stretch (low complexity) spans 545-561 (VPETIEESSSTVVVEEV). Positions 578–594 (DVQKPIEDQDTPDEKES) are enriched in basic and acidic residues. The segment covering 626–638 (SISSNVAESSSVS) has biased composition (low complexity). Residues 674–684 (EEAHSDNDKEN) are compositionally biased toward basic and acidic residues.

In terms of assembly, homodimer. Interacts with Cam; interaction is calcium-dependent and is inhibited by PKC-mediated phosphorylation of Akap200. Interacts with N/Notch; the interaction stabilizes N/Notch protein levels by preventing Cbl-mediated ubiquitination and subsequent lysosomal degradation of N/Notch. Interacts with Pka-R2. Binds to F-actin; interaction is independent of myristoylation, but is inhibited by Akap200 phosphorylation and Cam binding. Isoform B: Does not bind to Pka-R2. Myristoylated; myristoylation promotes accumulation at the cell periphery. In terms of processing, phosphorylated; phosphorylation prevents binding to F-actin and Cam. In terms of tissue distribution, detected in the brain in both neurons and glia (including perineurial glia); specifically in the neuronal nuclei in the cortex and synaptic neuropil (at protein level). Detected in germline cells, somatic follicle cells and outer rim of the ring canals during oogenesis (at protein level). Isoform A: Detected in the adult (at protein level). Isoform B: Detected in the adult with higher levels in the head (at protein level).

The protein resides in the cytoplasm. The protein localises to the cytosol. It localises to the cell membrane. It is found in the cytoskeleton. Its function is as follows. Scaffolding protein involved in the regulation of PKA signaling and anchoring to the actin cytoskeleton integrating signals propagated by cAMP, diacylglycerol and calcium. Contributes to the maintenance and regulation of cytoskeletal structures in germline via PKA-mediated signaling. As part of ethanol response in the glia, mediates ethanol-induced structural remodeling of actin cytoskeleton and perineurial membrane topology by anchoring PKA to the membrane of perineurial glia. In specific tissues such as eye and thorax, promotes N/Notch protein stability by inhibiting Cbl-mediated ubiquitination and lysosomal degradation pathway of N/Notch in a PKA-independent way. In the circadian brain neurons evening cells (E-cells), might have a role in circadian pacemaker synchronization by playing a redundant role in signaling downstream of the G protein-couple receptor Pdfr. The chain is A-kinase anchor protein 200 from Drosophila melanogaster (Fruit fly).